Reading from the N-terminus, the 206-residue chain is Protein FAM228A (206 aa).

The protein belongs to the FAM228 family.

This Homo sapiens (Human) protein is Protein FAM228A (FAM228A).